Consider the following 323-residue polypeptide: Sphingolipid delta(4)-desaturase DES1 (323 aa).

G2 is lipidated: N-myristoyl glycine. The next 2 helical transmembrane spans lie at 41–61 (PNLIWIVTSMLLVQLASFYLV) and 68–88 (WLMFWSYAFGSCLNHSMTLAI). The Histidine box-1 signature appears at 89–93 (HEISH). Residues 104–124 (WNRWFGMFANLSLGVPYSISF) traverse the membrane as a helical segment. Positions 128–132 (HMDHH) match the Histidine box-2 motif. 3 helical membrane-spanning segments follow: residues 152 to 172 (FFCTTLRKLVWVILQPLFYAF), 184 to 204 (HLEVINTVIQVTFDVLVYYVF), and 210 to 230 (VYMLAASLLGLGLHPISGHFI). Residues 259–263 (HNEHH) carry the Histidine box-3 motif. Phosphoserine is present on S307.

It belongs to the fatty acid desaturase type 1 family. DEGS subfamily. Interacts with RLBP1; the interaction increases synthesis of chromophore-precursors by DEGS1. Myristoylation can target the enzyme to the mitochondria leading to an increase in ceramide levels.

The protein resides in the mitochondrion membrane. The protein localises to the endoplasmic reticulum membrane. The catalysed reaction is an N-acylsphinganine + 2 Fe(II)-[cytochrome b5] + O2 + 2 H(+) = an N-acylsphing-4-enine + 2 Fe(III)-[cytochrome b5] + 2 H2O. The enzyme catalyses all-trans-retinol = 11-cis-retinol. It carries out the reaction all-trans-retinol = 9-cis-retinol. It catalyses the reaction all-trans-retinol = 13-cis-retinol. The catalysed reaction is 11-cis-retinol = 13-cis-retinol. The enzyme catalyses 11-cis-retinol = 9-cis-retinol. Its function is as follows. Has sphingolipid-delta-4-desaturase activity. Converts D-erythro-sphinganine to D-erythro-sphingosine (E-sphing-4-enine). Catalyzes the equilibrium isomerization of retinols. This Rattus norvegicus (Rat) protein is Sphingolipid delta(4)-desaturase DES1.